A 437-amino-acid polypeptide reads, in one-letter code: Probable peptidoglycan-N-acetylglucosamine deacetylase ARB_03699 (437 aa).

The signal sequence occupies residues 1–20 (MLMRLYTFFAAALLACCAAA). A disordered region spans residues 47–132 (STRAATTTTT…STSAAAPSTP (86 aa)). N-linked (GlcNAc...) asparagine glycosylation occurs at N99. Residues 149 to 334 (GTVAITFDDG…EVKRRGLKAV (186 aa)) form the NodB homology domain. Catalysis depends on D156, which acts as the Proton acceptor. D157, H209, and H213 together coordinate Zn(2+). Substrate is bound at residue Y251. Residue H308 is the Proton donor of the active site. Positions 350–370 (TTPVQVPTGTSTTSPTATPTS) are enriched in low complexity. The tract at residues 350–384 (TTPVQVPTGTSTTSPTATPTSPGTPPPAPTQPGVA) is disordered. The 47-residue stretch at 389 to 435 (KWHTVVSGDTCYDIAAANGISLDNLYKWNPAVGTSCASLWLGYAVCV) folds into the LysM domain.

The cofactor is Zn(2+). Co(2+) is required as a cofactor.

It is found in the secreted. It carries out the reaction peptidoglycan-N-acetyl-D-glucosamine + H2O = peptidoglycan-D-glucosamine + acetate.. In terms of biological role, catalyzes the deacetylation of N-acetylglucosamine (GlcNAc) residues in peptidoglycan. The polypeptide is Probable peptidoglycan-N-acetylglucosamine deacetylase ARB_03699 (Arthroderma benhamiae (strain ATCC MYA-4681 / CBS 112371) (Trichophyton mentagrophytes)).